Reading from the N-terminus, the 146-residue chain is Hemoglobin subunit beta (146 aa).

The Globin domain maps to 2–146; it reads HWTADEKQLI…VAHALALGYH (145 aa). Positions 63 and 92 each coordinate heme b.

Belongs to the globin family. As to quaternary structure, heterotetramer of two alpha chains and two beta chains. As to expression, red blood cells.

Its function is as follows. Involved in oxygen transport from the lung to the various peripheral tissues. This Chrysemys picta bellii (Western painted turtle) protein is Hemoglobin subunit beta (HBB).